The chain runs to 200 residues: Probable GTP-binding protein EngB (200 aa).

One can recognise an EngB-type G domain in the interval 24–199 (EGAEVAFAGR…RGVIGGWLGL (176 aa)). GTP is bound by residues 32 to 39 (GRSNAGKS), 59 to 63 (GRTQQ), 77 to 80 (DLPG), 144 to 147 (TKAD), and 178 to 180 (FSG). Mg(2+) is bound by residues Ser39 and Thr61.

Belongs to the TRAFAC class TrmE-Era-EngA-EngB-Septin-like GTPase superfamily. EngB GTPase family. Mg(2+) serves as cofactor.

Necessary for normal cell division and for the maintenance of normal septation. The chain is Probable GTP-binding protein EngB from Stenotrophomonas maltophilia (strain K279a).